A 426-amino-acid polypeptide reads, in one-letter code: tRNA methyltransferase 10 homolog C (426 aa).

The N-terminal 41 residues, 1–41 (MPVLLKMSVSITFLRPFARVLVPFTLHRKRRVLYSTIMQRY), are a transit peptide targeting the mitochondrion. Phosphoserine is present on serine 86. The stretch at 138 to 166 (LYIKEKMKKARQIKKEMKKAEKEEPKKDQ) forms a coiled coil. An SAM-dependent MTase TRM10-type domain is found at 193-385 (MGWKGAQAMQ…KFVPSRKHAG (193 aa)).

Belongs to the class IV-like SAM-binding methyltransferase superfamily. TRM10 family. As to quaternary structure, component of mitochondrial ribonuclease P, a complex composed of TRMT10C/MRPP1, HSD17B10/MRPP2 and PRORP/MRPP3. Interacts with HSD17B10/MRPP2; forming the MRPP1-MRPP2 subcomplex of the mitochondrial ribonuclease P complex. Interacts with GRSF1.

It is found in the mitochondrion matrix. The protein localises to the mitochondrion nucleoid. The enzyme catalyses adenosine(9) in tRNA + S-adenosyl-L-methionine = N(1)-methyladenosine(9) in tRNA + S-adenosyl-L-homocysteine + H(+). It catalyses the reaction guanosine(9) in tRNA + S-adenosyl-L-methionine = N(1)-methylguanosine(9) in tRNA + S-adenosyl-L-homocysteine + H(+). The catalysed reaction is an adenosine in mRNA + S-adenosyl-L-methionine = an N(1)-methyladenosine in mRNA + S-adenosyl-L-homocysteine + H(+). Its function is as follows. Mitochondrial tRNA N(1)-methyltransferase involved in mitochondrial tRNA maturation. Component of mitochondrial ribonuclease P, a complex composed of TRMT10C/MRPP1, HSD17B10/MRPP2 and PRORP/MRPP3, which cleaves tRNA molecules in their 5'-ends. Together with HSD17B10/MRPP2, forms a subcomplex of the mitochondrial ribonuclease P, named MRPP1-MRPP2 subcomplex, which displays functions that are independent of the ribonuclease P activity. The MRPP1-MRPP2 subcomplex catalyzes the formation of N(1)-methylguanine and N(1)-methyladenine at position 9 (m1G9 and m1A9, respectively) in tRNAs; TRMT10C/MRPP1 acting as the catalytic N(1)-methyltransferase subunit. The MRPP1-MRPP2 subcomplex also acts as a tRNA maturation platform: following 5'-end cleavage by the mitochondrial ribonuclease P complex, the MRPP1-MRPP2 subcomplex enhances the efficiency of 3'-processing catalyzed by ELAC2, retains the tRNA product after ELAC2 processing and presents the nascent tRNA to the mitochondrial CCA tRNA nucleotidyltransferase TRNT1 enzyme. In addition to tRNA N(1)-methyltransferase activity, TRMT10C/MRPP1 also acts as a mRNA N(1)-methyltransferase by mediating methylation of adenosine residues at the N(1) position of MT-ND5 mRNA. Associates with mitochondrial DNA complexes at the nucleoids to initiate RNA processing and ribosome assembly. In Bos taurus (Bovine), this protein is tRNA methyltransferase 10 homolog C.